A 241-amino-acid chain; its full sequence is MSILTAENLAKSYKSRKVVSDVSLTVNSNEIVGLLGPNGAGKTTTFYMVVGLVRQDQGKIVIDGEDISLLPMHNRAQRGIGYLPQEASIFRRLTVYENLMAVLEIRKDLTPQQRREKADELIEEFNISHIRDNLGQALSGGERRRVEIARALAANPKFILLDEPFAGVDPISVSDIKKIITDLRNRGLGVLITDHNVRETLDVCERAYIVGAGKIIATGTPEQVMNDEQVKRVYLGEQFKL.

The ABC transporter domain occupies 4–237; the sequence is LTAENLAKSY…EQVKRVYLGE (234 aa). 36-43 lines the ATP pocket; that stretch reads GPNGAGKT.

This sequence belongs to the ABC transporter superfamily. Outer membrane lipopolysaccharide export (TC 1.B.42) family. In terms of assembly, component of the lipopolysaccharide transport and assembly complex. The LptBFG transporter is composed of two ATP-binding proteins (LptB) and two transmembrane proteins (LptF and LptG).

The protein resides in the cytoplasm. The protein localises to the cell inner membrane. Part of the ABC transporter complex LptBFG involved in the translocation of lipopolysaccharide (LPS) from the inner membrane to the outer membrane. Probably responsible for energy coupling to the transport system. This Haemophilus influenzae (strain ATCC 51907 / DSM 11121 / KW20 / Rd) protein is Lipopolysaccharide export system ATP-binding protein LptB (lptB).